The following is a 485-amino-acid chain: Glutamate--tRNA ligase 1 (485 aa).

The short motif at 10–20 (PSPTGAIHIGN) is the 'HIGH' region element. The 'KMSKS' region signature appears at 252–256 (KLSKR). Lys-255 provides a ligand contact to ATP.

Belongs to the class-I aminoacyl-tRNA synthetase family. Glutamate--tRNA ligase type 1 subfamily. In terms of assembly, monomer.

The protein resides in the cytoplasm. It catalyses the reaction tRNA(Glu) + L-glutamate + ATP = L-glutamyl-tRNA(Glu) + AMP + diphosphate. In terms of biological role, catalyzes the attachment of glutamate to tRNA(Glu) in a two-step reaction: glutamate is first activated by ATP to form Glu-AMP and then transferred to the acceptor end of tRNA(Glu). This chain is Glutamate--tRNA ligase 1, found in Thermoanaerobacter pseudethanolicus (strain ATCC 33223 / 39E) (Clostridium thermohydrosulfuricum).